The sequence spans 394 residues: MRLNRQFIRTQLIAQNILSKNAPAKRENATENPAAVLEKAYSRLKSQSSTGGINQFNYSKTSVSGNSGTFSKVYQSANDRTVTDTGEETVIQSQNPYESESDIRIKILDEKYSRMNAINKTKSDPLGYIKDKYQNSKSPYFRSDLSAAERQAAYDNETEWLFKGKAQNYNLQDAVFRNVTFHGEVEAENEKVYQRGQVNQQLQVLLNRNHIHIPEGTELTFTITPIDYQVRVSGTDDQDLIKQIEQVLQSGDNSKELFLHIMKSQSSDSAQFSEEAYKKYQAAREMYEVTGYHLKDLEVIDGRYVTPEGRDLMDVYKEELEKDPVQKQTASYAISYYRSELSKIAEAGYNAIPDFILSIDYSNGSLRDVGQSKSYGTGDTGWLEALKRQTGVNY.

This is an uncharacterized protein from Bacillus subtilis (strain 168).